Reading from the N-terminus, the 830-residue chain is uncharacterized protein (830 aa).

Disordered stretches follow at residues Met1–Cys28, Arg70–Ala147, and Ala186–Leu210. Residues Asn10–Ile27 are compositionally biased toward polar residues. Low complexity-rich tracts occupy residues Gln100–Ser130 and Ala186–Ser199. A compositionally biased stretch (polar residues) spans Glu200–Leu210. Helical transmembrane passes span Trp505 to Gly525, Asp529 to Pro549, Phe551 to Arg571, Phe584 to Phe604, Met622 to Leu642, Ile659 to Leu679, Ile691 to Gly711, Ile715 to Ile735, Phe740 to Gly760, and Ile802 to Gly822.

It belongs to the ThrE exporter (TC 2.A.79) family.

It localises to the cell membrane. The protein resides in the cell tip. This is an uncharacterized protein from Schizosaccharomyces pombe (strain 972 / ATCC 24843) (Fission yeast).